We begin with the raw amino-acid sequence, 670 residues long: ATP-dependent DNA helicase Rep (670 aa).

One can recognise a UvrD-like helicase ATP-binding domain in the interval 1-277 (MLFNEHQKKA…IIMQHNYRSS (277 aa)). Residues 22-29 (AGAGSGKT) and R275 each bind ATP. Residues 278-562 (GRILKVANAL…QLMTLHASKG (285 aa)) form the UvrD-like helicase C-terminal domain.

Belongs to the helicase family. UvrD subfamily. Homodimer.

It catalyses the reaction Couples ATP hydrolysis with the unwinding of duplex DNA by translocating in the 3'-5' direction.. It carries out the reaction ATP + H2O = ADP + phosphate + H(+). Its function is as follows. Rep helicase is a single-stranded DNA-dependent ATPase involved in DNA replication; it can initiate unwinding at a nick in the DNA. It binds to the single-stranded DNA and acts in a progressive fashion along the DNA in the 3' to 5' direction. This chain is ATP-dependent DNA helicase Rep, found in Buchnera aphidicola subsp. Baizongia pistaciae (strain Bp).